We begin with the raw amino-acid sequence, 189 residues long: Peptidyl-tRNA hydrolase (189 aa).

Y17 lines the tRNA pocket. The active-site Proton acceptor is the H22. TRNA-binding residues include F65, N67, and N113.

The protein belongs to the PTH family. Monomer.

It is found in the cytoplasm. It carries out the reaction an N-acyl-L-alpha-aminoacyl-tRNA + H2O = an N-acyl-L-amino acid + a tRNA + H(+). Hydrolyzes ribosome-free peptidyl-tRNAs (with 1 or more amino acids incorporated), which drop off the ribosome during protein synthesis, or as a result of ribosome stalling. Functionally, catalyzes the release of premature peptidyl moieties from peptidyl-tRNA molecules trapped in stalled 50S ribosomal subunits, and thus maintains levels of free tRNAs and 50S ribosomes. The chain is Peptidyl-tRNA hydrolase from Mycoplasma genitalium (strain ATCC 33530 / DSM 19775 / NCTC 10195 / G37) (Mycoplasmoides genitalium).